The sequence spans 229 residues: MKNLVILSGAGISAESGIKTFRDADGLWEGHDIMEVASPYGWKKNPQKVLDFYNQRRRQLFEVYPNKAHKALAELEKHYQVNIITQNVDDLHERAGSSRILHLHGELLSVRSEKDPNLVYRWEKDLNLGDLAKDKSQLRPDIVWFGEAVPLLKEAISLVKQAHLLIIIGTSLQVYPAASLYTHAHKDALIYYIDPKAKNAHLPQNVQCINESAVHAMQDLMPKLIEMAS.

The Deacetylase sirtuin-type domain occupies 1–227 (MKNLVILSGA…QDLMPKLIEM (227 aa)). 9 to 28 (GAGISAESGIKTFRDADGLW) contacts NAD(+). Substrate-binding residues include tyrosine 53 and arginine 56. 86 to 89 (QNVD) serves as a coordination point for NAD(+). The active-site Proton acceptor is the histidine 104. 169–171 (GTS) is an NAD(+) binding site.

The protein belongs to the sirtuin family. Class III subfamily.

The protein localises to the cytoplasm. It carries out the reaction N(6)-acetyl-L-lysyl-[protein] + NAD(+) + H2O = 2''-O-acetyl-ADP-D-ribose + nicotinamide + L-lysyl-[protein]. The enzyme catalyses N(6)-succinyl-L-lysyl-[protein] + NAD(+) + H2O = 2''-O-succinyl-ADP-D-ribose + nicotinamide + L-lysyl-[protein]. Its function is as follows. NAD-dependent lysine deacetylase and desuccinylase that specifically removes acetyl and succinyl groups on target proteins. Modulates the activities of several proteins which are inactive in their acylated form. In Helicobacter pylori (strain ATCC 700392 / 26695) (Campylobacter pylori), this protein is NAD-dependent protein deacylase.